Consider the following 563-residue polypeptide: Phosphomethylpyrimidine synthase (563 aa).

Substrate contacts are provided by residues Asn-180, Met-209, Tyr-238, His-274, 294–296 (SRG), 335–338 (DGLR), and Glu-374. Residue His-378 coordinates Zn(2+). Residue Tyr-401 coordinates substrate. His-442 is a binding site for Zn(2+). [4Fe-4S] cluster is bound by residues Cys-522, Cys-525, and Cys-530.

It belongs to the ThiC family. [4Fe-4S] cluster serves as cofactor.

The catalysed reaction is 5-amino-1-(5-phospho-beta-D-ribosyl)imidazole + S-adenosyl-L-methionine = 4-amino-2-methyl-5-(phosphooxymethyl)pyrimidine + CO + 5'-deoxyadenosine + formate + L-methionine + 3 H(+). It functions in the pathway cofactor biosynthesis; thiamine diphosphate biosynthesis. In terms of biological role, catalyzes the synthesis of the hydroxymethylpyrimidine phosphate (HMP-P) moiety of thiamine from aminoimidazole ribotide (AIR) in a radical S-adenosyl-L-methionine (SAM)-dependent reaction. The polypeptide is Phosphomethylpyrimidine synthase (Geobacillus thermodenitrificans (strain NG80-2)).